The chain runs to 340 residues: Glycerol-3-phosphate dehydrogenase [NAD(P)+] (340 aa).

Ser14, Tyr15, His35, and Lys109 together coordinate NADPH. Sn-glycerol 3-phosphate contacts are provided by Lys109, Gly138, and Thr140. Ala142 is a binding site for NADPH. Positions 194, 247, 257, 258, and 259 each coordinate sn-glycerol 3-phosphate. The active-site Proton acceptor is Lys194. Arg258 serves as a coordination point for NADPH. NADPH-binding residues include Val282 and Glu284.

The protein belongs to the NAD-dependent glycerol-3-phosphate dehydrogenase family.

It localises to the cytoplasm. It catalyses the reaction sn-glycerol 3-phosphate + NAD(+) = dihydroxyacetone phosphate + NADH + H(+). It carries out the reaction sn-glycerol 3-phosphate + NADP(+) = dihydroxyacetone phosphate + NADPH + H(+). The protein operates within membrane lipid metabolism; glycerophospholipid metabolism. Functionally, catalyzes the reduction of the glycolytic intermediate dihydroxyacetone phosphate (DHAP) to sn-glycerol 3-phosphate (G3P), the key precursor for phospholipid synthesis. In Photorhabdus laumondii subsp. laumondii (strain DSM 15139 / CIP 105565 / TT01) (Photorhabdus luminescens subsp. laumondii), this protein is Glycerol-3-phosphate dehydrogenase [NAD(P)+].